The sequence spans 498 residues: U4/U6 small nuclear ribonucleoprotein Prp31 (498 aa).

Coiled coils occupy residues 84 to 119 (EAAPEYKVIVDANNLTVEIENELNIIHKFIRDKYSK) and 180 to 214 (DEELERIEEACDMALELNQSKHRIYEYVESRMSFI). Residues 214-332 (IAPNLSIIVG…IERKFDKWQE (119 aa)) enclose the Nop domain. The interval 333–356 (PPPVKQVKPLPAPLDGQRKKRGGR) is disordered. The Nuclear localization signal (NLS) signature appears at 350-363 (RKKRGGRRYRKMKE).

Belongs to the PRP31 family. In terms of assembly, identified in the spliceosome B complex. Component of the U4/U6-U5 tri-snRNP complex. Component of some MLL1/MLL complex.

It localises to the nucleus. It is found in the nucleus speckle. Its subcellular location is the cajal body. Its function is as follows. Involved in pre-mRNA splicing as component of the spliceosome. Required for the assembly of the U4/U5/U6 tri-snRNP complex, one of the building blocks of the spliceosome. The protein is U4/U6 small nuclear ribonucleoprotein Prp31 (prpf31) of Xenopus tropicalis (Western clawed frog).